A 1063-amino-acid polypeptide reads, in one-letter code: Exportin-1 (1063 aa).

Positions 43 to 109 (AQSILTTLKE…KKYVVSLIIK (67 aa)) constitute an Importin N-terminal domain. Residues 1034–1063 (AEEQSNKHQMQRNIPGMLNPHELPEDMQDE) form a disordered region.

It belongs to the exportin family. In terms of assembly, interacts with Clbn (via its N-terminus). Associates with the nuclear pore complex via interaction with mbo and Nup214. Interacts with target proteins containing NES sequences such as actin and dl. As to expression, high expression observed in the developing embryonic brain, hind gut and posterior spiracles shortly before dorsal closure; and in the ventral nerve cord, midgut and somatic musculature shortly after dorsal closure. Expression increases when the tissue is well developed.

The protein resides in the nucleus. It localises to the nucleus membrane. In terms of biological role, receptor for the leucine-rich nuclear export signal (NES). Binds cooperatively to the NES on its target protein and to the small GTPase Ran in its active GTP-bound form. Involved in the export of dl, RpS2 and the pre-40S ribosome from the nucleus to the cytoplasm. Plays an important role in nuclear pore assembly by mediating nucleoporin condensation and biogenesis of annulate lamellae. Required for the function or maintenance of certain tissues such as brain and gut. In Drosophila melanogaster (Fruit fly), this protein is Exportin-1.